The chain runs to 286 residues: NAD kinase (286 aa).

Catalysis depends on Asp74, which acts as the Proton acceptor. Residues 74-75 (DG), 148-149 (ND), Asp178, Ala186, 189-194 (TAYNLS), and Gln244 contribute to the NAD(+) site.

It belongs to the NAD kinase family. It depends on a divalent metal cation as a cofactor.

The protein resides in the cytoplasm. It carries out the reaction NAD(+) + ATP = ADP + NADP(+) + H(+). In terms of biological role, involved in the regulation of the intracellular balance of NAD and NADP, and is a key enzyme in the biosynthesis of NADP. Catalyzes specifically the phosphorylation on 2'-hydroxyl of the adenosine moiety of NAD to yield NADP. The protein is NAD kinase of Campylobacter jejuni subsp. doylei (strain ATCC BAA-1458 / RM4099 / 269.97).